The following is a 402-amino-acid chain: Acyl-[acyl-carrier-protein] desaturase 3, chloroplastic (402 aa).

The N-terminal 32 residues, 1–32, are a transit peptide targeting the chloroplast; sequence MSLTGCLPPRPPCSMRRRTSGGGASVSPVVAM. The segment at 1 to 66 is disordered; sequence MSLTGCLPPR…EVPPQVTHTL (66 aa). Residues E139, E178, H181, E231, E264, and H267 each coordinate Fe cation.

It belongs to the fatty acid desaturase type 2 family. As to quaternary structure, homodimer. The cofactor is Fe(2+).

It is found in the plastid. The protein resides in the chloroplast. It participates in lipid metabolism; fatty acid metabolism. In terms of biological role, introduces a cis double bond in the acyl chain of an acyl-[acyl-carrier protein]. The protein is Acyl-[acyl-carrier-protein] desaturase 3, chloroplastic of Oryza sativa subsp. japonica (Rice).